The primary structure comprises 364 residues: Dihydroorotate dehydrogenase (quinone) (364 aa).

FMN is bound by residues 61-65 and Thr85; that span reads AGYDK. Lys65 contacts substrate. A substrate-binding site is contributed by 110–114; that stretch reads NRLGF. FMN is bound by residues Asn139 and Asn170. Substrate is bound at residue Asn170. Ser173 serves as the catalytic Nucleophile. Asn175 is a binding site for substrate. Residues Lys215 and Ser243 each contribute to the FMN site. 244–245 contacts substrate; it reads NT. Residues Gly266, Gly295, and 316–317 each bind FMN; that span reads YT.

Belongs to the dihydroorotate dehydrogenase family. Type 2 subfamily. In terms of assembly, monomer. The cofactor is FMN.

The protein localises to the cell membrane. It carries out the reaction (S)-dihydroorotate + a quinone = orotate + a quinol. It participates in pyrimidine metabolism; UMP biosynthesis via de novo pathway; orotate from (S)-dihydroorotate (quinone route): step 1/1. Its function is as follows. Catalyzes the conversion of dihydroorotate to orotate with quinone as electron acceptor. The chain is Dihydroorotate dehydrogenase (quinone) from Brucella canis (strain ATCC 23365 / NCTC 10854 / RM-666).